Reading from the N-terminus, the 356-residue chain is tRNA N6-adenosine threonylcarbamoyltransferase (356 aa).

Histidine 124, histidine 128, and tyrosine 145 together coordinate a divalent metal cation. Residues 145-149, aspartate 177, glycine 192, glutamate 196, and asparagine 287 contribute to the substrate site; that span reads YVSGG. Aspartate 315 lines the a divalent metal cation pocket.

It belongs to the KAE1 / TsaD family. Component of the EKC/KEOPS complex composed of at least BUD32, CGI121, GON7, KAE1 and PCC1; the whole complex dimerizes. A divalent metal cation is required as a cofactor.

It localises to the cytoplasm. The protein resides in the nucleus. It catalyses the reaction L-threonylcarbamoyladenylate + adenosine(37) in tRNA = N(6)-L-threonylcarbamoyladenosine(37) in tRNA + AMP + H(+). Component of the EKC/KEOPS complex that is required for the formation of a threonylcarbamoyl group on adenosine at position 37 (t(6)A37) in tRNAs that read codons beginning with adenine. The complex is probably involved in the transfer of the threonylcarbamoyl moiety of threonylcarbamoyl-AMP (TC-AMP) to the N6 group of A37. KAE1 likely plays a direct catalytic role in this reaction, but requires other protein(s) of the complex to fulfill this activity. The EKC/KEOPS complex also promotes both telomere uncapping and telomere elongation. The complex is required for efficient recruitment of transcriptional coactivators. In Yarrowia lipolytica (strain CLIB 122 / E 150) (Yeast), this protein is tRNA N6-adenosine threonylcarbamoyltransferase.